The sequence spans 643 residues: Threonine--tRNA ligase (643 aa).

A TGS domain is found at 1–61 (MIKVSLKDGS…NEDVSLSICT (61 aa)). A catalytic region spans residues 240-540 (DHNKLGRELK…LIEKYAGAFP (301 aa)). The Zn(2+) site is built by Cys335, His386, and His517.

The protein belongs to the class-II aminoacyl-tRNA synthetase family. Homodimer. Requires Zn(2+) as cofactor.

The protein resides in the cytoplasm. It catalyses the reaction tRNA(Thr) + L-threonine + ATP = L-threonyl-tRNA(Thr) + AMP + diphosphate + H(+). In terms of biological role, catalyzes the attachment of threonine to tRNA(Thr) in a two-step reaction: L-threonine is first activated by ATP to form Thr-AMP and then transferred to the acceptor end of tRNA(Thr). Also edits incorrectly charged L-seryl-tRNA(Thr). This chain is Threonine--tRNA ligase, found in Clostridium botulinum (strain Alaska E43 / Type E3).